Here is a 229-residue protein sequence, read N- to C-terminus: Enolase-phosphatase E1 (229 aa).

Mg(2+) is bound by residues D7 and E9. Substrate-binding positions include 122–123 (SS) and K161. D186 serves as a coordination point for Mg(2+).

It belongs to the HAD-like hydrolase superfamily. MasA/MtnC family. In terms of assembly, monomer. Requires Mg(2+) as cofactor.

It is found in the cytoplasm. The protein localises to the nucleus. The enzyme catalyses 5-methylsulfanyl-2,3-dioxopentyl phosphate + H2O = 1,2-dihydroxy-5-(methylsulfanyl)pent-1-en-3-one + phosphate. Its pathway is amino-acid biosynthesis; L-methionine biosynthesis via salvage pathway; L-methionine from S-methyl-5-thio-alpha-D-ribose 1-phosphate: step 3/6. It participates in amino-acid biosynthesis; L-methionine biosynthesis via salvage pathway; L-methionine from S-methyl-5-thio-alpha-D-ribose 1-phosphate: step 4/6. Functionally, bifunctional enzyme that catalyzes the enolization of 2,3-diketo-5-methylthiopentyl-1-phosphate (DK-MTP-1-P) into the intermediate 2-hydroxy-3-keto-5-methylthiopentenyl-1-phosphate (HK-MTPenyl-1-P), which is then dephosphorylated to form the acireductone 1,2-dihydroxy-3-keto-5-methylthiopentene (DHK-MTPene). In Clavispora lusitaniae (strain ATCC 42720) (Yeast), this protein is Enolase-phosphatase E1.